We begin with the raw amino-acid sequence, 251 residues long: Prolactin-7B1 (251 aa).

The signal sequence occupies residues 1-29; sequence MNTSLTQLCFWALQILLMSNLLLWEDVVS. N-linked (GlcNAc...) asparagine glycosylation is found at Asn-2 and Asn-73. Cystine bridges form between Cys-100–Cys-216 and Cys-233–Cys-241.

It belongs to the somatotropin/prolactin family. In terms of tissue distribution, expression restricted to placenta. Abundantly expressed in trophoblast cells of the junctional zone and trophoblasts migrating into the mesometrial decidua.

It localises to the secreted. This is Prolactin-7B1 (Prl7b1) from Mus musculus (Mouse).